We begin with the raw amino-acid sequence, 278 residues long: Fasciclin-like arabinogalactan protein 5 (278 aa).

The signal sequence occupies residues 1 to 24; the sequence is MGLKASLSLLSLTILLVFSKVVTA. The FAS1 domain maps to 25–169; the sequence is NNITLAFQKY…LSIIQITMPI (145 aa). N26, N74, N126, and N159 each carry an N-linked (GlcNAc...) asparagine glycan. The segment at 199 to 257 is disordered; the sequence is VVPAPGPAADDNSPDSAVPKTPPAPATDTPEADSPAPAPSADNEKIEAADKAKPSSSAS. A compositionally biased stretch (low complexity) spans 224–239; sequence ATDTPEADSPAPAPSA. Positions 240–251 are enriched in basic and acidic residues; the sequence is DNEKIEAADKAK. Residue S255 is the site of GPI-anchor amidated serine attachment. Residues 256-278 constitute a propeptide, removed in mature form; sequence ASKAGWSFDVILLLAFLASFAGF.

It belongs to the fasciclin-like AGP family.

Its subcellular location is the cell membrane. Its function is as follows. May be a cell surface adhesion protein. The protein is Fasciclin-like arabinogalactan protein 5 (FLA5) of Arabidopsis thaliana (Mouse-ear cress).